A 336-amino-acid chain; its full sequence is Protease HtpX homolog (336 aa).

2 consecutive transmembrane segments (helical) span residues 7-24 (AMLL…GFLI) and 29-48 (GMMI…YWNA). Histidine 130 contributes to the Zn(2+) binding site. Glutamate 131 is an active-site residue. Histidine 134 is a Zn(2+) binding site. A run of 2 helical transmembrane segments spans residues 145–165 (IVAT…FLGG) and 171–191 (PFGF…AMIV). Glutamate 200 is a binding site for Zn(2+). Residues 278 to 287 (QQMAGGTQAA) are compositionally biased toward low complexity. The tract at residues 278-336 (QQMAGGTQAAPRPTPRQAGEQQPSGPWGQAPQAEQPAEPERPKANPWGRNPTGPKGRWS) is disordered.

It belongs to the peptidase M48B family. It depends on Zn(2+) as a cofactor.

Its subcellular location is the cell inner membrane. This Mesorhizobium japonicum (strain LMG 29417 / CECT 9101 / MAFF 303099) (Mesorhizobium loti (strain MAFF 303099)) protein is Protease HtpX homolog.